Consider the following 801-residue polypeptide: Na(+)/H(+) antiporter subunit A1 (801 aa).

Transmembrane regions (helical) follow at residues 4–25, 30–49, 79–101, 108–127, 131–153, 166–188, 208–230, 243–265, 270–289, 302–324, 339–361, 373–395, 429–451, 472–494, 526–548, 589–611, 621–641, 646–668, 672–694, 707–729, and 767–784; these read LHIA…YRFF, LGWF…LTLI, LGLL…SIGY, LGNF…GVVL, VIIL…SFWR, LIIT…IPTQ, FIFA…PFYI, SAYL…MTPI, QGWV…WASL, AFST…ISYH, AAIF…TGAV, LGGL…LSMA, YLFP…KFIM, ILML…FPGI, AFLS…SYWV, NNLV…SVPF, IRIF…LILF, LFSI…FFKA, ALTQ…YHLP, LTNA…IAYG, and LFES…YTMI.

It belongs to the CPA3 antiporters (TC 2.A.63) subunit A family. May form a heterooligomeric complex that consists of seven subunits: mnhA1, mnhB1, mnhC1, mnhD1, mnhE1, mnhF1 and mnhG1.

It is found in the cell membrane. Its activity is regulated as follows. Na(+) extrusion is completely inhibited by the H(+) conductor carbonyl cyanide m-chlorophenylhydrazone (CCCP). Functionally, mnh complex is a Na(+)/H(+) antiporter involved in Na(+) excretion. The polypeptide is Na(+)/H(+) antiporter subunit A1 (mnhA1) (Staphylococcus aureus (strain MSSA476)).